Reading from the N-terminus, the 1489-residue chain is FERM domain-containing protein C (1489 aa).

Polar residues-rich tracts occupy residues 59-79 (DTES…NFNS) and 103-118 (NSPL…STSI). 4 disordered regions span residues 59–86 (DTES…HQHL), 103–197 (NSPL…PSTL), 252–271 (NSVQ…NNNN), and 277–312 (EQQQ…TPDS). Residues 131 to 153 (SSSSSSSDGDSNSSSDSSDNSSE) show a composition bias toward low complexity. Basic residues predominate over residues 163–172 (HLHLHRHHRK). The segment covering 181–195 (FESSSESSEQYGSPS) has biased composition (low complexity). The stretch at 202 to 289 (ALKLEKIMQI…QEKQQQQQQH (88 aa)) forms a coiled coil. Positions 277–287 (EQQQEKQQQQQ) are enriched in low complexity. Positions 303 to 312 (RSVSISTPDS) are enriched in polar residues. The stretch at 356 to 383 (IKVSKVLEEEMQLQQEFEKQEQLRHSAR) forms a coiled coil. Disordered stretches follow at residues 396-435 (NLQD…ENQN), 459-479 (VITP…KILT), and 508-569 (EDPL…TTTT). Over residues 421–435 (ENVSNDNSSDNENQN) the composition is skewed to low complexity. Residues 545 to 555 (TASSSSSPTLQ) are compositionally biased toward polar residues. Low complexity predominate over residues 556 to 569 (ATKTTTTTTTTTTT). The FERM domain occupies 637–934 (ILVHISLVDQ…GYKYFIQHDE (298 aa)). LRR repeat units follow at residues 1017–1040 (KVEL…LKDT), 1053–1075 (ENLN…AFEP), 1087–1110 (HLNL…IEKY), 1111–1133 (PNIE…VILR), 1167–1191 (NKTI…IFEG), 1196–1219 (SLSL…KFIK), 1254–1278 (SCHI…VIKG), 1282–1306 (NQTI…LCQS), 1339–1362 (NKTI…AIGT), 1367–1391 (NETL…ILNG), 1395–1418 (NSTI…SLAN), 1428–1450 (VITL…QLST), and 1451–1474 (NIPI…IKNA).

This Dictyostelium discoideum (Social amoeba) protein is FERM domain-containing protein C (frmC).